Here is an 834-residue protein sequence, read N- to C-terminus: Periplasmic nitrate reductase (834 aa).

Residues 1 to 29 (MNLTRREFAKANAAAIAAAAAGLPILVRA) constitute a signal peptide (tat-type signal). One can recognise a 4Fe-4S Mo/W bis-MGD-type domain in the interval 41-97 (LVWNKAPCRFCGTGCSVMVATRDGQVVATHGDIKAEVNRGINCVKGYFLSKIMYGSD). [4Fe-4S] cluster-binding residues include Cys48, Cys51, Cys55, and Cys83. Mo-bis(molybdopterin guanine dinucleotide) is bound by residues Lys85, Gln152, Asn177, Cys181, 214–221 (WGSNMAEM), 245–249 (STFEH), 264–266 (QTD), Met375, Gln379, Asn485, 511–512 (SD), Lys534, Asp561, and 721–730 (TGRVLEHWHT). Phe797 is a binding site for substrate. 2 residues coordinate Mo-bis(molybdopterin guanine dinucleotide): Asn805 and Lys822.

The protein belongs to the prokaryotic molybdopterin-containing oxidoreductase family. NasA/NapA/NarB subfamily. Component of the periplasmic nitrate reductase NapAB complex composed of NapA and NapB. Requires [4Fe-4S] cluster as cofactor. It depends on Mo-bis(molybdopterin guanine dinucleotide) as a cofactor. Post-translationally, predicted to be exported by the Tat system. The position of the signal peptide cleavage has not been experimentally proven.

It is found in the periplasm. The catalysed reaction is 2 Fe(II)-[cytochrome] + nitrate + 2 H(+) = 2 Fe(III)-[cytochrome] + nitrite + H2O. Functionally, catalytic subunit of the periplasmic nitrate reductase complex NapAB. Receives electrons from NapB and catalyzes the reduction of nitrate to nitrite. In Pseudomonas aeruginosa (strain LESB58), this protein is Periplasmic nitrate reductase.